Reading from the N-terminus, the 320-residue chain is uncharacterized protein (320 aa).

The next 7 membrane-spanning stretches (helical) occupy residues 107–127 (LSKE…AGIY), 131–151 (VALL…IALS), 169–189 (LIAE…YLPI), 200–220 (ITLD…GSLS), 228–248 (IAVG…FGLL), 260–280 (ALIL…VIFS), and 299–319 (TLYA…LIIY).

Its subcellular location is the cell membrane. This is an uncharacterized protein from Methanocaldococcus jannaschii (strain ATCC 43067 / DSM 2661 / JAL-1 / JCM 10045 / NBRC 100440) (Methanococcus jannaschii).